The primary structure comprises 103 residues: Cycloviolacin-O9 (103 aa).

An N-terminal signal peptide occupies residues 1-9 (AAFALPAFA). Residues 10 to 69 (SFEKDVITPAALEAVLNRKAPLYNIMMENDAILNVIANVKTVISNPVLEEALLKTNHGVN) constitute a propeptide that is removed on maturation. Positions 70 to 99 (GIPCGESCVWIPCLTSAVGCSCKSKVCYRN) form a cross-link, cyclopeptide (Gly-Asn). Cystine bridges form between cysteine 73-cysteine 89, cysteine 77-cysteine 91, and cysteine 82-cysteine 96. The propeptide occupies 100–103 (SLDN).

In terms of processing, this is a cyclic peptide.

Functionally, probably participates in a plant defense mechanism. This Viola biflora (Yellow wood violet) protein is Cycloviolacin-O9.